A 761-amino-acid polypeptide reads, in one-letter code: uncharacterized protein (761 aa).

A CR-type zinc finger spans residues 1–84 (MIVKCPICDG…CGGSGKVVKC (84 aa)). An S1 motif domain is found at 135-200 (GKFYKGVVTR…EKREIDFKYI (66 aa)).

This is an uncharacterized protein from Methanocaldococcus jannaschii (strain ATCC 43067 / DSM 2661 / JAL-1 / JCM 10045 / NBRC 100440) (Methanococcus jannaschii).